Consider the following 204-residue polypeptide: Phosphoprotein p30 (204 aa).

It belongs to the asfivirus phosphoprotein p30 family. Oligomer. Interacts with host HNRNPK. Phosphorylated on serine residues in the 115 N-terminal amino acids.

It is found in the host cytoplasm. The protein resides in the host nucleus. The protein localises to the virion. Modifies the subcellular distribution of heterogeneous nuclear ribonucleoprotein K (HNRNPK) and may contribute to modulate HNRNPK functions related to processing and export of mRNAs during ASFV infection. Necessary for virus internalization. The sequence is that of Phosphoprotein p30 from African swine fever virus (strain Badajoz 1971 Vero-adapted) (Ba71V).